The primary structure comprises 305 residues: Acetyl-coenzyme A carboxylase carboxyl transferase subunit beta (305 aa).

The CoA carboxyltransferase N-terminal domain occupies 23–292; that stretch reads GWLKCTHCNE…EENEPSPPPK (270 aa). 4 residues coordinate Zn(2+): Cys-27, Cys-30, Cys-46, and Cys-49. A C4-type zinc finger spans residues 27–49; that stretch reads CTHCNELIHANELEQNSNCCPKC. A disordered region spans residues 281-305; that stretch reads FSEENEPSPPPKNLIKKTSPLKDKN.

This sequence belongs to the AccD/PCCB family. In terms of assembly, acetyl-CoA carboxylase is a heterohexamer composed of biotin carboxyl carrier protein (AccB), biotin carboxylase (AccC) and two subunits each of ACCase subunit alpha (AccA) and ACCase subunit beta (AccD). The cofactor is Zn(2+).

It localises to the cytoplasm. The catalysed reaction is N(6)-carboxybiotinyl-L-lysyl-[protein] + acetyl-CoA = N(6)-biotinyl-L-lysyl-[protein] + malonyl-CoA. Its pathway is lipid metabolism; malonyl-CoA biosynthesis; malonyl-CoA from acetyl-CoA: step 1/1. Its function is as follows. Component of the acetyl coenzyme A carboxylase (ACC) complex. Biotin carboxylase (BC) catalyzes the carboxylation of biotin on its carrier protein (BCCP) and then the CO(2) group is transferred by the transcarboxylase to acetyl-CoA to form malonyl-CoA. The sequence is that of Acetyl-coenzyme A carboxylase carboxyl transferase subunit beta from Protochlamydia amoebophila (strain UWE25).